Consider the following 44-residue polypeptide: Photosystem II reaction center protein K (44 aa).

The propeptide occupies 1–7; that stretch reads MESLLLA. The chain crosses the membrane as a helical span at residues 23–43; the sequence is FPVIPVFFLLLAFVWQAAVGF.

This sequence belongs to the PsbK family. PSII is composed of 1 copy each of membrane proteins PsbA, PsbB, PsbC, PsbD, PsbE, PsbF, PsbH, PsbI, PsbJ, PsbK, PsbL, PsbM, PsbT, PsbX, PsbY, PsbZ, Psb30/Ycf12, at least 3 peripheral proteins of the oxygen-evolving complex and a large number of cofactors. It forms dimeric complexes.

The protein resides in the plastid. It localises to the chloroplast thylakoid membrane. Functionally, one of the components of the core complex of photosystem II (PSII). PSII is a light-driven water:plastoquinone oxidoreductase that uses light energy to abstract electrons from H(2)O, generating O(2) and a proton gradient subsequently used for ATP formation. It consists of a core antenna complex that captures photons, and an electron transfer chain that converts photonic excitation into a charge separation. This chain is Photosystem II reaction center protein K, found in Thalassiosira pseudonana (Marine diatom).